We begin with the raw amino-acid sequence, 348 residues long: High mobility group protein 20A (348 aa).

Disordered regions lie at residues 1–114 (MENL…YVRF) and 181–213 (SRKA…DTKE). 2 stretches are compositionally biased toward polar residues: residues 34–47 (SESS…QPVN) and 56–71 (SQVQ…TAEN). Positions 72–82 (TEQKPEEEQQR) are enriched in basic and acidic residues. The span at 83 to 97 (TKRGGWAKGRKRKKP) shows a compositional bias: basic residues. The HMG box DNA-binding region spans 104–172 (PKSPLTGYVR…RYMRELEQYQ (69 aa)). Residues 183–213 (KAQDRQKGKLHRQDGARQPVHDHEKEADTKE) are compositionally biased toward basic and acidic residues. Positions 230–274 (SKAREAELRQLRKSNMEFEERNAALQKHVESMRTAVEKLEVDVIQ) form a coiled coil.

It localises to the nucleus. In terms of biological role, plays a role in neuronal differentiation. The protein is High mobility group protein 20A (HMG20A) of Gallus gallus (Chicken).